The chain runs to 463 residues: Competence protein ComFA (463 aa).

Zn(2+)-binding residues include Cys-60, Cys-63, Cys-84, and Cys-87. Residues 133–285 (IEAISKKEEL…LNGQLHSVRI (153 aa)) form the Helicase ATP-binding domain. 146-153 (AVCGAGKT) is an ATP binding site. A DEAD box motif is present at residues 233-236 (DEVD). A Helicase C-terminal domain is found at 317–463 (AVKRWIEFHV…ELAAKVECTD (147 aa)).

The protein belongs to the DEAD box helicase family. In terms of assembly, monomer and dimer in solution. Interacts with DprA and ComFC; ComFA-ComFC form rings about 150 Angstroms in diameter with apparent 6-fold symmetry. It depends on Zn(2+) as a cofactor.

The protein localises to the cytoplasm. Involved in transformation (genetic competence for DNA uptake). Required for DNA uptake but not for DNA binding to cells. DNA uptake is energy dependent, this protein may provide the driving force for DNA uptake. Does not have helicase activity, translocates on single-stranded (ss)DNA in a 5'-3' direction in an ATP-dependent manner, but does not unwind double-stranded (ds)DNA. ATP hydrolysis causes the release of ssDNA from ComFA. A ssDNA-stimulated ATPase; dsDNA does not stimulate ATPase. ATP hydrolysis causes the release of ssDNA from ComFA. Binds ssDNA but only very poorly to dsDNA in the absence of ATP. Binding to ssDNA does not require free DNA ends. This is Competence protein ComFA from Bacillus subtilis (strain 168).